Reading from the N-terminus, the 706-residue chain is DNA ligase (706 aa).

Residues 47-51, 96-97, and Glu-133 contribute to the NAD(+) site; these read DSEYD and SI. Catalysis depends on Lys-135, which acts as the N6-AMP-lysine intermediate. Positions 156, 192, 323, and 347 each coordinate NAD(+). The Zn(2+) site is built by Cys-441, Cys-444, Cys-459, and Cys-465. One can recognise a BRCT domain in the interval 624–706; the sequence is VAPKPLSGKT…MRLLASAEAE (83 aa).

This sequence belongs to the NAD-dependent DNA ligase family. LigA subfamily. Mg(2+) is required as a cofactor. Requires Mn(2+) as cofactor.

The enzyme catalyses NAD(+) + (deoxyribonucleotide)n-3'-hydroxyl + 5'-phospho-(deoxyribonucleotide)m = (deoxyribonucleotide)n+m + AMP + beta-nicotinamide D-nucleotide.. DNA ligase that catalyzes the formation of phosphodiester linkages between 5'-phosphoryl and 3'-hydroxyl groups in double-stranded DNA using NAD as a coenzyme and as the energy source for the reaction. It is essential for DNA replication and repair of damaged DNA. This chain is DNA ligase, found in Polaromonas sp. (strain JS666 / ATCC BAA-500).